The sequence spans 251 residues: Osmotin-like protein (251 aa).

The N-terminal stretch at 1–21 (MSHLTTFLVFFLLAFVTYTYA) is a signal peptide. 8 disulfide bridges follow: C31-C226, C73-C83, C88-C94, C142-C214, C147-C197, C155-C165, C169-C178, and C179-C184. N233 carries N-linked (GlcNAc...) asparagine glycosylation.

This sequence belongs to the thaumatin family.

The polypeptide is Osmotin-like protein (OLPA) (Nicotiana tabacum (Common tobacco)).